Reading from the N-terminus, the 67-residue chain is ATP synthase protein 8 (67 aa).

The helical transmembrane segment at 8–24 (TWFITILATILTLFIIM) threads the bilayer. The residue at position 54 (K54) is an N6-acetyllysine; alternate. Residue K54 is modified to N6-succinyllysine; alternate. N6-acetyllysine is present on K57.

It belongs to the ATPase protein 8 family. F-type ATPases have 2 components, CF(1) - the catalytic core - and CF(0) - the membrane proton channel. Component of an ATP synthase complex composed of ATP5PB, ATP5MC1, ATP5F1E, ATP5PD, ATP5ME, ATP5PF, ATP5MF, MT-ATP6, MT-ATP8, ATP5F1A, ATP5F1B, ATP5F1D, ATP5F1C, ATP5PO, ATP5MG, ATP5MK and ATP5MJ. Interacts with PRICKLE3.

The protein resides in the mitochondrion membrane. In terms of biological role, mitochondrial membrane ATP synthase (F(1)F(0) ATP synthase or Complex V) produces ATP from ADP in the presence of a proton gradient across the membrane which is generated by electron transport complexes of the respiratory chain. F-type ATPases consist of two structural domains, F(1) - containing the extramembraneous catalytic core and F(0) - containing the membrane proton channel, linked together by a central stalk and a peripheral stalk. During catalysis, ATP synthesis in the catalytic domain of F(1) is coupled via a rotary mechanism of the central stalk subunits to proton translocation. Part of the complex F(0) domain. Minor subunit located with subunit a in the membrane. The protein is ATP synthase protein 8 (MT-ATP8) of Artibeus jamaicensis (Jamaican fruit-eating bat).